The primary structure comprises 189 residues: Putative manganese efflux pump MntP (189 aa).

The next 6 membrane-spanning stretches (helical) occupy residues 6–26 (IFGIAVALAMDAFAVSIAAGV), 39–59 (LAWHFGLFQALMPIVGWYAGL), 71–91 (WIAFFLLAFVSFNMIRESFDA), 106–126 (LVLLSIATSIDALAVGLSLSV), 131–151 (VWMPATVIGITAAVFTVGGLM), and 169–189 (VGAGVLLFIGLRILYAHGVFY).

Belongs to the MntP (TC 9.B.29) family.

The protein localises to the cell inner membrane. Its function is as follows. Probably functions as a manganese efflux pump. In Desulfosudis oleivorans (strain DSM 6200 / JCM 39069 / Hxd3) (Desulfococcus oleovorans), this protein is Putative manganese efflux pump MntP.